Reading from the N-terminus, the 116-residue chain is Galanin-like peptide (116 aa).

A signal peptide spans 1-24 (MAPPSVPLVLLLVLLLSLAETPAS). The propeptide occupies 87 to 116 (NVMETFAKPEIGDLGMLSMKIPKEEDVLKS).

It belongs to the galanin family. Isoform 2 is found in ganglia of ganglioneuroma and ganglioneuroblastoma, as well as in differentiated tumor cells of neuroblastoma tissues. Not found in undifferentiated neuroblasts. Isoform 2 is found in the skin, in pericytes covering microvascular arterioles and venules on their abluminal surfaces. In larger vessels, isoform 2 is expressed in layers of smooth muscle cells. Isoform 2 is not detected in endothelial cells.

The protein localises to the secreted. Its function is as follows. Hypothalamic neuropeptide which binds to the G-protein-coupled galanin receptors (GALR1, GALR2 and GALR3). Involved in a large number of putative physiological functions in CNS homeostatic processes, including the regulation of gonadotropin-releasing hormone secretion. In terms of biological role, exhibits potent and dose-dependent vasoconstrictor and anti-edema activity in the cutaneous microvasculature, a physiologic effects which does not appear to be mediated via GALR1 or GALR2. Exhibits antimicrobial activity against Gram-negative bacterias, inducing bacterial membrane blebbing. In Homo sapiens (Human), this protein is Galanin-like peptide (GALP).